A 299-amino-acid chain; its full sequence is dTDP-4-dehydrorhamnose reductase (299 aa).

NADH contacts are provided by residues 10–12 (GQV), D30, 39–40 (DF), and 63–65 (AHT). 11 to 12 (QV) contacts NADPH. NADPH is bound by residues 39–40 (DF), 63–65 (AHT), and Y102. Residue 104 to 105 (TD) participates in dTDP-beta-L-rhamnose binding. Residues Y128 and K132 each coordinate NADH. 2 residues coordinate NADPH: Y128 and K132. Residue Y128 is the Proton donor/acceptor of the active site. W153 lines the dTDP-beta-L-rhamnose pocket.

Belongs to the dTDP-4-dehydrorhamnose reductase family. Homodimer. Requires Mg(2+) as cofactor.

The enzyme catalyses dTDP-beta-L-rhamnose + NADP(+) = dTDP-4-dehydro-beta-L-rhamnose + NADPH + H(+). Its pathway is carbohydrate biosynthesis; dTDP-L-rhamnose biosynthesis. The protein operates within bacterial outer membrane biogenesis; LPS O-antigen biosynthesis. Its function is as follows. Involved in the biosynthesis of the dTDP-L-rhamnose which is an important component of lipopolysaccharide (LPS). Catalyzes the reduction of dTDP-6-deoxy-L-lyxo-4-hexulose to yield dTDP-L-rhamnose. RmlD uses NADH and NADPH nearly equally well. This is dTDP-4-dehydrorhamnose reductase from Escherichia coli (strain K12).